A 411-amino-acid chain; its full sequence is Proteasome-activating nucleotidase 2 (411 aa).

Positions 35–75 (IVAVNGELQAQLDDVEARREELREEVNRLQRENETLKTASL) form a coiled coil. Residues 196-201 (GTGKTM) and H335 each bind ATP. The tract at residues 408 to 411 (SYIQ) is docks into pockets in the proteasome alpha-ring to cause gate opening.

This sequence belongs to the AAA ATPase family. Homohexamer. The hexameric complex has a two-ring architecture resembling a top hat that caps the 20S proteasome core at one or both ends. Upon ATP-binding, the C-terminus of PAN interacts with the alpha-rings of the proteasome core by binding to the intersubunit pockets.

It localises to the cytoplasm. Functionally, ATPase which is responsible for recognizing, binding, unfolding and translocation of substrate proteins into the archaeal 20S proteasome core particle. Is essential for opening the gate of the 20S proteasome via an interaction with its C-terminus, thereby allowing substrate entry and access to the site of proteolysis. Thus, the C-termini of the proteasomal ATPase function like a 'key in a lock' to induce gate opening and therefore regulate proteolysis. Unfolding activity requires energy from ATP hydrolysis, whereas ATP binding alone promotes ATPase-20S proteasome association which triggers gate opening, and supports translocation of unfolded substrates. This is Proteasome-activating nucleotidase 2 from Halobacterium salinarum (strain ATCC 700922 / JCM 11081 / NRC-1) (Halobacterium halobium).